The primary structure comprises 440 residues: MKERILQEIKTRVNRKSWELWFSSFDVRSIEGNKVVFSVGNLFIKEWLEKKYHSVLSKAVKVVLGNDATFEITYEAFEPHSSYSEPLVKKRAVLLTPLNPDYTFENFVVGPGNSFAYHAALEVAKHPGRYNPLFIYGGVGLGKTHLLQSIGNYVVQNEPDLRVMYITSEKFLNDLVDSMKEGKLNEFREKYRKKVDILLIDDVQFLIGKTGVQTELFHTFNELHDSGKQIVICSDREPQKLSEFQDRLVSRFQMGLVAKLEPPDEETRKSIAKKMLEIEHGELPEEVLNFVAENVDDNLRRLRGAIIKLLVYKETTGKEVDLREAILLLKDFIKPNRVKAMDPIDELIEIVAKVTGVSREEILSNNRNVKALTARRIGMYVAKNHLNSSLRTIAEKFNRSHPVVLDSVKRVKDSLLKGNKQLKSLIDEVIGEISKRALSG.

A domain I, interacts with DnaA modulators region spans residues 1–69; sequence MKERILQEIK…VKVVLGNDAT (69 aa). Positions 69–96 are domain II; it reads TFEITYEAFEPHSSYSEPLVKKRAVLLT. The interval 97–313 is domain III, AAA+ region; that stretch reads PLNPDYTFEN…GAIIKLLVYK (217 aa). Residues Gly-140, Gly-142, Lys-143, and Thr-144 each contribute to the ATP site. The tract at residues 314–440 is domain IV, binds dsDNA; that stretch reads ETTGKEVDLR…GEISKRALSG (127 aa).

The protein belongs to the DnaA family. Oligomerizes as a right-handed, spiral filament on DNA at oriC.

The protein resides in the cytoplasm. Plays an essential role in the initiation and regulation of chromosomal replication. ATP-DnaA binds to the origin of replication (oriC) to initiate formation of the DNA replication initiation complex once per cell cycle. Binds the DnaA box (a 9 base pair repeat at the origin) and separates the double-stranded (ds)DNA. Forms a right-handed helical filament on oriC DNA; dsDNA binds to the exterior of the filament while single-stranded (ss)DNA is stabiized in the filament's interior. The ATP-DnaA-oriC complex binds and stabilizes one strand of the AT-rich DNA unwinding element (DUE), permitting loading of DNA polymerase. After initiation quickly degrades to an ADP-DnaA complex that is not apt for DNA replication. Binds acidic phospholipids. The polypeptide is Chromosomal replication initiator protein DnaA (Thermotoga petrophila (strain ATCC BAA-488 / DSM 13995 / JCM 10881 / RKU-1)).